The sequence spans 803 residues: Bromodomain-containing protein 2 (803 aa).

Met-1 is modified (N-acetylmethionine). Positions 1 to 28 (MLQNVTPHSKLPGEGNAGLLGLGPEAAA) are disordered. Residue Thr-6 is modified to Phosphothreonine. At Ser-37 the chain carries Phosphoserine. The disordered stretch occupies residues 53–73 (ALQLTPANPPPPEVSNPKKPG). Residues 74-180 (RVTNQLQYLH…KIFLQKVASM (107 aa)) enclose the Bromo 1 domain. Residues Asp-112, Tyr-155, Asn-156, Lys-157, Asp-160, and Asp-161 each coordinate a protein. Disordered stretches follow at residues 268–349 (PPAQ…LSEQ), 456–653 (EPLE…RQLS), and 739–803 (EKRL…SDSG). A compositionally biased stretch (low complexity) spans 285–298 (TTTPTPTAILAPGS). Phosphoserine occurs at positions 298, 301, and 305. Basic and acidic residues predominate over residues 316-332 (MRRESGRPIKPPRKDLP). A Bromo 2 domain is found at 344 to 453 (GKLSEQLKHC…DVFEFRYAKM (110 aa)). A compositionally biased stretch (acidic residues) spans 481-515 (SSEESSSESSSEEDEEEDEEEEEEEEESESSDSEE). Positions 545-567 (KPKRKREKKEKKKKRKAEKHRGR) are enriched in basic residues. The short motif at 556-560 (KKKRK) is the Nuclear localization signal element. Residues 634 to 716 (DSEEEEESRP…SCLRKKPRKP (83 aa)) enclose the NET domain. Ser-635 is subject to Phosphoserine. The span at 641-652 (SRPMSYDEKRQL) shows a compositional bias: basic and acidic residues. Residues 777–797 (SASSSSSDSSSSSSSSSSSDT) show a composition bias toward low complexity.

This sequence belongs to the BET family. Homodimer. Interacts with E2F1. Interacts with (acetylated) STAT3; promoting STAT3 recruitment to chromatin. Interacts with CTCF; promoting BRD2 recruitment to chromatin.

It is found in the nucleus. The protein localises to the chromosome. Functionally, chromatin reader protein that specifically recognizes and binds histone H4 acetylated at 'Lys-5' and 'Lys-12' (H4K5ac and H4K12ac, respectively), thereby controlling gene expression and remodeling chromatin structures. Recruits transcription factors and coactivators to target gene sites, and activates RNA polymerase II machinery for transcriptional elongation. Plays a key role in genome compartmentalization via its association with CTCF and cohesin: recruited to chromatin by CTCF and promotes formation of topologically associating domains (TADs) via its ability to bind acetylated histones, contributing to CTCF boundary formation and enhancer insulation. Also recognizes and binds acetylated non-histone proteins, such as STAT3. Involved in inflammatory response by regulating differentiation of naive CD4(+) T-cells into T-helper Th17: recognizes and binds STAT3 acetylated at 'Lys-87', promoting STAT3 recruitment to chromatin. In addition to acetylated lysines, also recognizes and binds lysine residues on histones that are both methylated and acetylated on the same side chain to form N6-acetyl-N6-methyllysine (Kacme), an epigenetic mark of active chromatin associated with increased transcriptional initiation. Specifically binds histone H4 acetyl-methylated at 'Lys-5' and 'Lys-12' (H4K5acme and H4K12acme, respectively). The protein is Bromodomain-containing protein 2 (BRD2) of Canis lupus familiaris (Dog).